The sequence spans 346 residues: DNA polymerase IV 2 (346 aa).

Residues 9–191 enclose the UmuC domain; it reads ILHVDLDQFL…RTVEALWGVG (183 aa). Residues aspartate 13 and aspartate 111 each contribute to the Mg(2+) site. The active site involves glutamate 112.

This sequence belongs to the DNA polymerase type-Y family. As to quaternary structure, monomer. The cofactor is Mg(2+).

The protein resides in the cytoplasm. It catalyses the reaction DNA(n) + a 2'-deoxyribonucleoside 5'-triphosphate = DNA(n+1) + diphosphate. Its function is as follows. Poorly processive, error-prone DNA polymerase involved in untargeted mutagenesis. Copies undamaged DNA at stalled replication forks, which arise in vivo from mismatched or misaligned primer ends. These misaligned primers can be extended by PolIV. Exhibits no 3'-5' exonuclease (proofreading) activity. May be involved in translesional synthesis, in conjunction with the beta clamp from PolIII. The polypeptide is DNA polymerase IV 2 (dinB2) (Mycobacterium bovis (strain ATCC BAA-935 / AF2122/97)).